The sequence spans 609 residues: MVKRNHKYQSGEGAQYMTRKAAMRKLQLSMQDFRRLCILKGIYPREPKHRVIAQRGSTDIKILYHRKDITFLLHEPIVWTLRDRKIFNRRIAHARAKGNNLLKNVRMANYPEIKLDHIIKERFPTFIDAIKELDDCMTLLFLFSTFPAMKVVTREITSLARRLTIEFMHYVIAAKALRKVFVSIKGYYFQAEIKGELVTWIVPHYYPFQPQRKEYVDFKIMKSFADFFTVMAGFVNYRLYNSINMVYPPQFSVSIDSDESRNNEETFVSERIAALNMDLLRSDRQGTEEEDEEIDLKLLDNDKDSEQVRKMHEEALSLSKLKNLFKGLKFFINREVPREPLVFIIRCFGGKVSWDKHLFVGSTFDETDESITHQIVDRPSLTKQYISRDYVQPQWIFDSVNQRKLLPTNKYFIGAVLPPHLSPFNRDDAIYVPPEEAAMQAGDEFEKQERAEGISDDEDEDFGMEEARKQVQLDYALVKAFREEKAEALNSGEAKKEQAEEDNEDDDQEPDQDETKKQRSEKKQKMAVVSGRVFKENPKEQKQLTKQEEALRAKMVKSRHKKLYRNLLDKQKKATKEANLLREKRQQIDKQKRKEQTQKRKAQRKEILA.

The 94-residue stretch at 320–413 (KLKNLFKGLK…KLLPTNKYFI (94 aa)) folds into the BRCT domain. Disordered regions lie at residues 443-462 (DEFEKQERAEGISDDEDEDF) and 488-609 (ALNS…EILA). Basic and acidic residues-rich tracts occupy residues 444–453 (EFEKQERAEG) and 488–498 (ALNSGEAKKEQ). Residues 481–509 (FREEKAEALNSGEAKKEQAEEDNEDDDQE) adopt a coiled-coil conformation. A compositionally biased stretch (acidic residues) spans 499–512 (AEEDNEDDDQEPDQ). Basic and acidic residues-rich tracts occupy residues 513-524 (DETKKQRSEKKQ) and 533-552 (VFKENPKEQKQLTKQEEALR). A coiled-coil region spans residues 539 to 607 (KEQKQLTKQE…QKRKAQRKEI (69 aa)). Positions 554–564 (KMVKSRHKKLY) are enriched in basic residues. Residues 567-609 (LLDKQKKATKEANLLREKRQQIDKQKRKEQTQKRKAQRKEILA) are compositionally biased toward basic and acidic residues.

Belongs to the pescadillo family.

The protein resides in the nucleus. It is found in the nucleolus. Its subcellular location is the nucleoplasm. In terms of biological role, required for maturation of ribosomal RNAs and formation of the large ribosomal subunit. This is Pescadillo homolog from Aedes aegypti (Yellowfever mosquito).